The primary structure comprises 248 residues: Triosephosphate isomerase (248 aa).

The substrate site is built by Asn11 and Lys13. The Electrophile role is filled by His95. Glu165 functions as the Proton acceptor in the catalytic mechanism.

This sequence belongs to the triosephosphate isomerase family. In terms of assembly, homodimer.

The protein resides in the cytoplasm. The enzyme catalyses D-glyceraldehyde 3-phosphate = dihydroxyacetone phosphate. It carries out the reaction dihydroxyacetone phosphate = methylglyoxal + phosphate. It participates in carbohydrate degradation; glycolysis; D-glyceraldehyde 3-phosphate from glycerone phosphate: step 1/1. Its pathway is carbohydrate biosynthesis; gluconeogenesis. Triosephosphate isomerase is an extremely efficient metabolic enzyme that catalyzes the interconversion between dihydroxyacetone phosphate (DHAP) and D-glyceraldehyde-3-phosphate (G3P) in glycolysis and gluconeogenesis. In terms of biological role, it is also responsible for the non-negligible production of methylglyoxal a reactive cytotoxic side-product that modifies and can alter proteins, DNA and lipids. This chain is Triosephosphate isomerase (tpi1), found in Oryzias latipes (Japanese rice fish).